Reading from the N-terminus, the 97-residue chain is NADH-quinone oxidoreductase subunit K (97 aa).

The next 3 helical transmembrane spans lie at 1–21 (MSEYLILCSILFSLGAFGVLY), 25–45 (ILVMFMCIELMLNSVNLLMVY), and 57–77 (VFVFFIMAVAAAEITIGLAIL).

The protein belongs to the complex I subunit 4L family. As to quaternary structure, NDH-1 is composed of 14 different subunits. Subunits NuoA, H, J, K, L, M, N constitute the membrane sector of the complex.

It localises to the cell inner membrane. The catalysed reaction is a quinone + NADH + 5 H(+)(in) = a quinol + NAD(+) + 4 H(+)(out). Its function is as follows. NDH-1 shuttles electrons from NADH, via FMN and iron-sulfur (Fe-S) centers, to quinones in the respiratory chain. The immediate electron acceptor for the enzyme in this species is believed to be a menaquinone. Couples the redox reaction to proton translocation (for every two electrons transferred, four hydrogen ions are translocated across the cytoplasmic membrane), and thus conserves the redox energy in a proton gradient. This is NADH-quinone oxidoreductase subunit K from Cytophaga hutchinsonii (strain ATCC 33406 / DSM 1761 / CIP 103989 / NBRC 15051 / NCIMB 9469 / D465).